A 341-amino-acid chain; its full sequence is Enduracididine beta-hydroxylase (341 aa).

2 residues coordinate Fe cation: histidine 146 and glutamate 148. Positions 203–223 are disordered; that stretch reads HRIHGKAPGDESARESALRER. Position 300 (histidine 300) interacts with Fe cation.

Belongs to the clavaminate synthase family. The cofactor is Fe(2+).

The catalysed reaction is L-enduracididine + 2-oxoglutarate + O2 = (3S)-3-hydroxy-L-enduracididine + succinate + CO2. The protein operates within antibiotic biosynthesis. In terms of biological role, hydroxylates the beta carbon of free L-enduracididine to produce (3S)-3-hydroxy-L-enduracididine in biosynthesis of the nonproteinogenic amino acid beta-hydroxyenduracididine, a component of antibiotic mannopeptimycin. The chain is Enduracididine beta-hydroxylase (mppO) from Streptomyces hygroscopicus.